A 1083-amino-acid chain; its full sequence is Solute carrier family 12 member 7 (1083 aa).

The segment at 1–52 is disordered; that stretch reads MPTNFTVVPVEAHADGGGDETAERTEAPGTPEGPEPERPSPGDGNPRENSPF. The Cytoplasmic segment spans residues 1 to 119; that stretch reads MPTNFTVVPV…RREAKAPRMG (119 aa). The span at 12–26 shows a compositional bias: basic and acidic residues; it reads AHADGGGDETAERTE. At threonine 30 the chain carries Phosphothreonine. A phosphoserine mark is found at serine 50 and serine 62. Residues 120–142 form a discontinuously helical membrane-spanning segment; sequence TFIGVYLPCLQNILGVILFLRLT. Residues asparagine 131 and isoleucine 132 each coordinate K(+). Valine 135 lines the chloride pocket. The Extracellular segment spans residues 143-149; the sequence is WIVGVAG. Residues 150 to 172 traverse the membrane as a helical segment; it reads VLESFLIVAMCCTCTMLTAISMS. Topologically, residues 173–196 are cytoplasmic; that stretch reads AIATNGVVPAGGSYYMISRSLGPE. Residues 197-225 form a helical membrane-spanning segment; sequence FGGAVGLCFYLGTTFAGAMYILGTIEIFL. Residues 226–249 lie on the Extracellular side of the membrane; the sequence is TYISPGAAIFQAEAAGGEAAAMLH. Transmembrane regions (helical) follow at residues 250–270 and 272–300; these read NMRV…FVGV and YVNK…KSAF. Residues 301–419 lie on the Extracellular side of the membrane; sequence DPPDIPVCLL…PYVLTDIAAS (119 aa). Cystine bridges form between cysteine 308/cysteine 323 and cysteine 343/cysteine 352. Asparagine 312 is a glycosylation site (N-linked (GlcNAc...) asparagine). Residue asparagine 360 is glycosylated (N-linked (GlcNAc...) asparagine). The chain crosses the membrane as a helical span at residues 420-440; that stretch reads FTLLVGIYFPSVTGIMAGSNR. Residues proline 429 and threonine 432 each contribute to the K(+) site. Proline 429 contacts chloride. Chloride is bound by residues glycine 433 and isoleucine 434. At 441 to 450 the chain is on the cytoplasmic side; the sequence is SGDLKDAQKS. A helical transmembrane segment spans residues 451–473; sequence IPTGTILAIVTTSFIYLSCIVLF. The Extracellular segment spans residues 474–504; sequence GACIEGVVLRDKFGEALQGNLVIGMLAWPSP. A helical membrane pass occupies residues 505–531; that stretch reads WVIVIGSFFSTCGAGLQSLTGAPRLLQ. Residues 532–554 are Cytoplasmic-facing; the sequence is AIARDGIVPFLQVFGHGKANGEP. The next 2 helical transmembrane spans lie at 555 to 571 and 574 to 598; these read TWAL…GILI and LDSV…ACAV. Residue tyrosine 589 coordinates chloride. The Cytoplasmic portion of the chain corresponds to 599–612; sequence QTLLRTPNWRPRFK. 2 helical membrane-spanning segments follow: residues 613 to 632 and 636 to 651; these read FYHW…LMFI and YYAL…IYKY. Residues 652–1083 are Cytoplasmic-facing; that stretch reads IEYRGAEKEW…GGREVITIYS (432 aa). The segment at 664 to 680 is scissor helix; it reads GIRGLSLNAARYALLRV. A phosphothreonine mark is found at threonine 973 and threonine 980.

It belongs to the SLC12A transporter family. K/Cl co-transporter subfamily. As to quaternary structure, homodimer; adopts a domain-swap conformation at the scissor helices connecting the transmembrane domain and C-terminal domain. Heterodimer with K-Cl cotransporter SLC12A5. Detected in muscle, brain, lung, heart and kidney.

The protein resides in the cell membrane. It carries out the reaction K(+)(in) + chloride(in) = K(+)(out) + chloride(out). Its activity is regulated as follows. Activated by N-ethylmaleimide (NEM). Inhibited by furosemide, DIDS and bumetanide. The inhibition is much stronger in the presence of 50 mM K(+) in the uptake medium. Inhibited by DIOA. Inhibited by WNK3. Functionally, mediates electroneutral potassium-chloride cotransport when activated by cell swelling. May mediate K(+) uptake into Deiters' cells in the cochlea and contribute to K(+) recycling in the inner ear. Important for the survival of cochlear outer and inner hair cells and the maintenance of the organ of Corti. May be required for basolateral Cl(-) extrusion in the kidney and contribute to renal acidification. In Homo sapiens (Human), this protein is Solute carrier family 12 member 7.